We begin with the raw amino-acid sequence, 457 residues long: Acetylcholine receptor subunit alpha (457 aa).

An N-terminal signal peptide occupies residues 1-20 (MELSTVLLLLGLCSAGLVLG). Over 21–230 (SEHETRLVAK…ITYHFVMQRL (210 aa)) the chain is Extracellular. Cystine bridges form between Cys148/Cys162 and Cys212/Cys213. The N-linked (GlcNAc...) asparagine glycan is linked to Asn161. 3 consecutive transmembrane segments (helical) span residues 231-255 (PLYF…VFYL), 263-281 (MTLS…LVIV), and 297-316 (YMLF…VIVI). Residues 317 to 428 (NTHHRSPSTH…WKYVAMVMDH (112 aa)) are Cytoplasmic-facing. The chain crosses the membrane as a helical span at residues 429 to 447 (ILLGVFMLVCLIGTLAVFA).

The protein belongs to the ligand-gated ion channel (TC 1.A.9) family. Acetylcholine receptor (TC 1.A.9.1) subfamily. Alpha-1/CHRNA1 sub-subfamily. As to quaternary structure, one of the alpha chains that assemble within the acetylcholine receptor, a pentamer of two alpha chains, a beta, a delta, and a gamma (in immature muscle) or epsilon (in mature muscle) chains. The muscle heteropentamer composed of alpha-1, beta-1, delta, epsilon subunits interacts with the alpha-conotoxin ImII.

It is found in the postsynaptic cell membrane. The protein resides in the cell membrane. The catalysed reaction is K(+)(in) = K(+)(out). It catalyses the reaction Na(+)(in) = Na(+)(out). In terms of biological role, upon acetylcholine binding, the AChR responds by an extensive change in conformation that affects all subunits and leads to opening of an ion-conducting channel across the plasma membrane. The chain is Acetylcholine receptor subunit alpha (Chrna1) from Mus musculus (Mouse).